The primary structure comprises 272 residues: 3-methyl-2-oxobutanoate hydroxymethyltransferase (272 aa).

Mg(2+) contacts are provided by Asp42 and Asp86. 3-methyl-2-oxobutanoate contacts are provided by residues 42 to 43 (DS), Asp86, and Lys116. Glu118 lines the Mg(2+) pocket. The Proton acceptor role is filled by Glu185. The interval 251–272 (LKEQRDQRATPTTPPPPPAPDC) is disordered. Residues 262 to 272 (TTPPPPPAPDC) show a composition bias toward pro residues.

This sequence belongs to the PanB family. Homodecamer; pentamer of dimers. The cofactor is Mg(2+).

It localises to the cytoplasm. The catalysed reaction is 3-methyl-2-oxobutanoate + (6R)-5,10-methylene-5,6,7,8-tetrahydrofolate + H2O = 2-dehydropantoate + (6S)-5,6,7,8-tetrahydrofolate. Its pathway is cofactor biosynthesis; (R)-pantothenate biosynthesis; (R)-pantoate from 3-methyl-2-oxobutanoate: step 1/2. Catalyzes the reversible reaction in which hydroxymethyl group from 5,10-methylenetetrahydrofolate is transferred onto alpha-ketoisovalerate to form ketopantoate. The chain is 3-methyl-2-oxobutanoate hydroxymethyltransferase from Synechococcus sp. (strain CC9311).